Here is a 218-residue protein sequence, read N- to C-terminus: Pyridoxine/pyridoxamine 5'-phosphate oxidase (218 aa).

Substrate contacts are provided by residues R14–Y17 and K72. FMN is bound by residues R67 to K72, Y82 to T83, R88, K89, and Q111. Substrate contacts are provided by Y129, R133, and S137. FMN-binding positions include Q146 to S147 and W191. Residue R197–H199 participates in substrate binding. Position 201 (R201) interacts with FMN.

It belongs to the pyridoxamine 5'-phosphate oxidase family. As to quaternary structure, homodimer. It depends on FMN as a cofactor.

The catalysed reaction is pyridoxamine 5'-phosphate + O2 + H2O = pyridoxal 5'-phosphate + H2O2 + NH4(+). The enzyme catalyses pyridoxine 5'-phosphate + O2 = pyridoxal 5'-phosphate + H2O2. Its pathway is cofactor metabolism; pyridoxal 5'-phosphate salvage; pyridoxal 5'-phosphate from pyridoxamine 5'-phosphate: step 1/1. It participates in cofactor metabolism; pyridoxal 5'-phosphate salvage; pyridoxal 5'-phosphate from pyridoxine 5'-phosphate: step 1/1. Catalyzes the oxidation of either pyridoxine 5'-phosphate (PNP) or pyridoxamine 5'-phosphate (PMP) into pyridoxal 5'-phosphate (PLP). This chain is Pyridoxine/pyridoxamine 5'-phosphate oxidase, found in Escherichia coli (strain 55989 / EAEC).